Reading from the N-terminus, the 137-residue chain is Large ribosomal subunit protein uL16 (137 aa).

Belongs to the universal ribosomal protein uL16 family. As to quaternary structure, part of the 50S ribosomal subunit.

In terms of biological role, binds 23S rRNA and is also seen to make contacts with the A and possibly P site tRNAs. This Streptococcus agalactiae serotype Ia (strain ATCC 27591 / A909 / CDC SS700) protein is Large ribosomal subunit protein uL16.